Here is a 291-residue protein sequence, read N- to C-terminus: ATP synthase gamma chain (291 aa).

This sequence belongs to the ATPase gamma chain family. In terms of assembly, F-type ATPases have 2 components, CF(1) - the catalytic core - and CF(0) - the membrane proton channel. CF(1) has five subunits: alpha(3), beta(3), gamma(1), delta(1), epsilon(1). CF(0) has three main subunits: a, b and c.

It localises to the cell membrane. Its function is as follows. Produces ATP from ADP in the presence of a proton gradient across the membrane. The gamma chain is believed to be important in regulating ATPase activity and the flow of protons through the CF(0) complex. In Streptococcus equi subsp. zooepidemicus (strain MGCS10565), this protein is ATP synthase gamma chain.